The chain runs to 191 residues: Molybdenum cofactor guanylyltransferase (191 aa).

GTP contacts are provided by residues 13–15 (LAG), lysine 26, aspartate 72, and aspartate 102. Residue aspartate 102 participates in Mg(2+) binding.

This sequence belongs to the MobA family. Monomer. Requires Mg(2+) as cofactor.

It is found in the cytoplasm. The catalysed reaction is Mo-molybdopterin + GTP + H(+) = Mo-molybdopterin guanine dinucleotide + diphosphate. In terms of biological role, transfers a GMP moiety from GTP to Mo-molybdopterin (Mo-MPT) cofactor (Moco or molybdenum cofactor) to form Mo-molybdopterin guanine dinucleotide (Mo-MGD) cofactor. This is Molybdenum cofactor guanylyltransferase from Pseudomonas putida (strain ATCC 700007 / DSM 6899 / JCM 31910 / BCRC 17059 / LMG 24140 / F1).